A 137-amino-acid polypeptide reads, in one-letter code: Large ribosomal subunit protein bL17 (137 aa).

It belongs to the bacterial ribosomal protein bL17 family. As to quaternary structure, part of the 50S ribosomal subunit. Contacts protein L32.

This chain is Large ribosomal subunit protein bL17, found in Caulobacter vibrioides (strain ATCC 19089 / CIP 103742 / CB 15) (Caulobacter crescentus).